Consider the following 355-residue polypeptide: Sesquiterpene synthase-like protein Agr11 (355 aa).

This sequence belongs to the terpene synthase family.

This chain is Sesquiterpene synthase-like protein Agr11, found in Cyclocybe aegerita (Black poplar mushroom).